Reading from the N-terminus, the 188-residue chain is Transmembrane protein 160 (188 aa).

A mitochondrion-targeting transit peptide spans M1–R96. The interval S21 to S53 is disordered. The residue at position 48 (S48) is a Phosphoserine. The next 2 membrane-spanning stretches (helical) occupy residues F102–A122 and A135–L155. The segment at P168–E188 is disordered.

It belongs to the TMEM160 family. Expressed in peripheral sensory neurons of dorsal root ganglia (DRG).

The protein resides in the mitochondrion inner membrane. The polypeptide is Transmembrane protein 160 (Mus musculus (Mouse)).